The following is a 392-amino-acid chain: Formate-dependent phosphoribosylglycinamide formyltransferase (392 aa).

N(1)-(5-phospho-beta-D-ribosyl)glycinamide contacts are provided by residues 20 to 21 (EL) and glutamate 80. Residues arginine 112, lysine 153, 158-163 (SSGKGQ), 193-196 (EEFI), and glutamate 201 contribute to the ATP site. The region spanning 117 to 306 (RLAAEELGLP…EFELHVRAIL (190 aa)) is the ATP-grasp domain. Residues glutamate 265 and glutamate 277 each contribute to the Mg(2+) site. N(1)-(5-phospho-beta-D-ribosyl)glycinamide-binding positions include aspartate 284, lysine 354, and 361–362 (RR).

Belongs to the PurK/PurT family. As to quaternary structure, homodimer.

The catalysed reaction is N(1)-(5-phospho-beta-D-ribosyl)glycinamide + formate + ATP = N(2)-formyl-N(1)-(5-phospho-beta-D-ribosyl)glycinamide + ADP + phosphate + H(+). The protein operates within purine metabolism; IMP biosynthesis via de novo pathway; N(2)-formyl-N(1)-(5-phospho-D-ribosyl)glycinamide from N(1)-(5-phospho-D-ribosyl)glycinamide (formate route): step 1/1. Involved in the de novo purine biosynthesis. Catalyzes the transfer of formate to 5-phospho-ribosyl-glycinamide (GAR), producing 5-phospho-ribosyl-N-formylglycinamide (FGAR). Formate is provided by PurU via hydrolysis of 10-formyl-tetrahydrofolate. The chain is Formate-dependent phosphoribosylglycinamide formyltransferase from Geobacter metallireducens (strain ATCC 53774 / DSM 7210 / GS-15).